Here is a 97-residue protein sequence, read N- to C-terminus: Aspartyl/glutamyl-tRNA(Asn/Gln) amidotransferase subunit C (97 aa).

A disordered region spans residues S59–L78. Residues L63–L78 are compositionally biased toward basic and acidic residues.

Belongs to the GatC family. Heterotrimer of A, B and C subunits.

It catalyses the reaction L-glutamyl-tRNA(Gln) + L-glutamine + ATP + H2O = L-glutaminyl-tRNA(Gln) + L-glutamate + ADP + phosphate + H(+). The enzyme catalyses L-aspartyl-tRNA(Asn) + L-glutamine + ATP + H2O = L-asparaginyl-tRNA(Asn) + L-glutamate + ADP + phosphate + 2 H(+). Functionally, allows the formation of correctly charged Asn-tRNA(Asn) or Gln-tRNA(Gln) through the transamidation of misacylated Asp-tRNA(Asn) or Glu-tRNA(Gln) in organisms which lack either or both of asparaginyl-tRNA or glutaminyl-tRNA synthetases. The reaction takes place in the presence of glutamine and ATP through an activated phospho-Asp-tRNA(Asn) or phospho-Glu-tRNA(Gln). The protein is Aspartyl/glutamyl-tRNA(Asn/Gln) amidotransferase subunit C of Metallosphaera sedula (strain ATCC 51363 / DSM 5348 / JCM 9185 / NBRC 15509 / TH2).